The following is a 985-amino-acid chain: Lateral signaling target protein 2 homolog (985 aa).

Disordered stretches follow at residues 310–453 (PLGS…ETDE), 498–520 (EYGA…PSTS), 533–640 (LRLP…SSLS), and 747–892 (DNVF…TTTA). Low complexity-rich tracts occupy residues 327 to 348 (HPTT…TNTH), 384 to 393 (SLSPNSTPTA), and 401 to 422 (PSHS…PADW). The span at 423–453 (SDGDDEDEEDDDDDIEVEEEELDSTDDETDE) shows a compositional bias: acidic residues. Ser-537 and Ser-538 each carry phosphoserine. 2 stretches are compositionally biased toward basic residues: residues 563–589 (VYRH…HHQH) and 596–607 (HPHRTTRSGRKR). Low complexity-rich tracts occupy residues 629–640 (ASGDTSAASSLS) and 761–770 (NGNQANASAQ). A compositionally biased stretch (polar residues) spans 776–785 (GSIQRNNTVD). Ser-808 bears the Phosphoserine mark. Positions 812–866 (QESASTSTSSSQLHQEQQQLQIQVQRQRNNSVGSNTPSSASSTSSSSEQNSPVSA) are enriched in low complexity. Over residues 875 to 885 (QSNNETQMPSS) the composition is skewed to polar residues. An FYVE-type zinc finger spans residues 904 to 964 (DGKAPRCMSC…VCRECYVREV (61 aa)). Residues Cys-910, Cys-913, Cys-926, Cys-929, Cys-934, Cys-937, Cys-956, and Cys-959 each contribute to the Zn(2+) site.

This sequence belongs to the lst-2 family.

In terms of biological role, negative regulator of epidermal growth factor receptor (EGFR) signaling. The protein is Lateral signaling target protein 2 homolog of Drosophila ananassae (Fruit fly).